A 131-amino-acid polypeptide reads, in one-letter code: Phosphoribosyl-ATP pyrophosphatase 2 (131 aa).

The disordered stretch occupies residues 105–131 (RIGKPAAPHATRRPVIPQEARAVRKHR).

The protein belongs to the PRA-PH family.

The protein localises to the cytoplasm. The enzyme catalyses 1-(5-phospho-beta-D-ribosyl)-ATP + H2O = 1-(5-phospho-beta-D-ribosyl)-5'-AMP + diphosphate + H(+). It functions in the pathway amino-acid biosynthesis; L-histidine biosynthesis; L-histidine from 5-phospho-alpha-D-ribose 1-diphosphate: step 2/9. In Rhodopseudomonas palustris (strain ATCC BAA-98 / CGA009), this protein is Phosphoribosyl-ATP pyrophosphatase 2 (hisE2).